We begin with the raw amino-acid sequence, 174 residues long: Serine protease 2 (174 aa).

The cysteines at positions 15 and 36 are disulfide-linked. Active-site charge relay system residues include His35, Asp65, and Ser147. Cys141 and Cys168 form a disulfide bridge.

This sequence belongs to the peptidase S1 family.

It is found in the secreted. Broad substrate specificity. This chain is Serine protease 2, found in Streptomyces fradiae (Streptomyces roseoflavus).